The chain runs to 1249 residues: Cilia- and flagella-associated protein 57 (1249 aa).

WD repeat units follow at residues 105-148 (FQVQ…AIIK), 195-233 (GESS…WETS), 335-374 (SDKQ…ISKG), 386-425 (LHSA…LELY), 427-469 (EYQE…KEYS), 471-506 (RGCK…NINI), 509-548 (GHTG…RETE), and 635-674 (AHAG…GRGI). 2 coiled-coil regions span residues 690–1056 (KTDM…KTDL) and 1094–1165 (SDLQ…SALK).

This sequence belongs to the CFAP57 family. As to quaternary structure, may form homodimers. Associates with components of the nexin-dynein regulatory complex (N-DRC) and the CFAP184:CFAP263 complex. As to expression, predominanly expressed in testis, lung and skin. Weak expression in brain and kidney.

The protein localises to the cytoplasm. It is found in the cytoskeleton. It localises to the cilium axoneme. In terms of biological role, associates with components of the nexin-dynein regulatory complex (N-DRC), a key regulator of ciliary/flagellar motility, and might act as an inner dynein arm (IDA) hub or linkage. In Mus musculus (Mouse), this protein is Cilia- and flagella-associated protein 57.